The following is a 157-amino-acid chain: Protein FAM219A (157 aa).

M1 is subject to N-acetylmethionine. The segment at 1 to 103 is disordered; it reads MMEEIDRFQD…SRYSSSGYSS (103 aa). A compositionally biased stretch (basic and acidic residues) spans 17-33; that stretch reads SDRDCDAREEKQRELAR. Positions 38-52 are enriched in polar residues; that stretch reads KNGSMGSPVNQQPKK. S44 and S74 each carry phosphoserine. T85 carries the phosphothreonine modification. S87 and S94 each carry phosphoserine. Residues 94 to 103 are compositionally biased toward low complexity; the sequence is SRYSSSGYSS.

It belongs to the FAM219 family.

The protein is Protein FAM219A (Fam219a) of Mus musculus (Mouse).